A 352-amino-acid polypeptide reads, in one-letter code: Ketoisovalerate oxidoreductase subunit VorB (352 aa).

In terms of assembly, heterotrimer of the VorA, VorB and VorC subunits.

The catalysed reaction is 3-methyl-2-oxobutanoate + 2 oxidized [2Fe-2S]-[ferredoxin] + CoA = 2-methylpropanoyl-CoA + 2 reduced [2Fe-2S]-[ferredoxin] + CO2 + H(+). The polypeptide is Ketoisovalerate oxidoreductase subunit VorB (vorB) (Methanothermobacter thermautotrophicus (strain ATCC 29096 / DSM 1053 / JCM 10044 / NBRC 100330 / Delta H) (Methanobacterium thermoautotrophicum)).